The following is a 241-amino-acid chain: MRKSVIAGNWKMHMTCAETKNYLEEFIPLIKDLPNDRKIVIAPPFTAISTFSSYSNFDYLDIASQNIHWEDQGAFTAEISPKMLIEHNVKYAIVGHSEPRKYFSESDEQINKRAVFAQSSGLTPIVCVGETLEQRERGEANRVITRQVEQGLENTDPSNLIIAYEPIWAIGTGKTCEASDANKICALIRELIGFDDVIIQYGGSVKPNNIDEIMSMSDINGVLVGGSSLDPISFSRIANYE.

A substrate-binding site is contributed by 9–11; sequence NWK. The active-site Electrophile is the His96. Catalysis depends on Glu165, which acts as the Proton acceptor. Substrate-binding positions include Gly171, Ser204, and 225–226; that span reads GG.

This sequence belongs to the triosephosphate isomerase family. In terms of assembly, homodimer.

The protein localises to the cytoplasm. The enzyme catalyses D-glyceraldehyde 3-phosphate = dihydroxyacetone phosphate. Its pathway is carbohydrate biosynthesis; gluconeogenesis. It participates in carbohydrate degradation; glycolysis; D-glyceraldehyde 3-phosphate from glycerone phosphate: step 1/1. In terms of biological role, involved in the gluconeogenesis. Catalyzes stereospecifically the conversion of dihydroxyacetone phosphate (DHAP) to D-glyceraldehyde-3-phosphate (G3P). This is Triosephosphate isomerase from Prochlorococcus marinus (strain MIT 9515).